Here is a 123-residue protein sequence, read N- to C-terminus: Small ribosomal subunit protein uS12 (123 aa).

The residue at position 89 (D89) is a 3-methylthioaspartic acid.

Belongs to the universal ribosomal protein uS12 family. In terms of assembly, part of the 30S ribosomal subunit. Contacts proteins S8 and S17. May interact with IF1 in the 30S initiation complex.

With S4 and S5 plays an important role in translational accuracy. In terms of biological role, interacts with and stabilizes bases of the 16S rRNA that are involved in tRNA selection in the A site and with the mRNA backbone. Located at the interface of the 30S and 50S subunits, it traverses the body of the 30S subunit contacting proteins on the other side and probably holding the rRNA structure together. The combined cluster of proteins S8, S12 and S17 appears to hold together the shoulder and platform of the 30S subunit. In Bartonella tribocorum (strain CIP 105476 / IBS 506), this protein is Small ribosomal subunit protein uS12.